A 426-amino-acid chain; its full sequence is Probable alpha-galactosidase B (426 aa).

The N-terminal stretch at 1 to 13 is a signal peptide; it reads MSRSKTRQGKLPA. 2 disulfides stabilise this stretch: Cys24/Cys56 and Cys106/Cys136. Asp134 functions as the Nucleophile in the catalytic mechanism. 2 N-linked (GlcNAc...) asparagine glycosylation sites follow: Asn141 and Asn159. Substrate is bound at residue 204-208; that stretch reads EWGQA. Asn215 is a glycosylation site (N-linked (GlcNAc...) asparagine). Asp226 serves as the catalytic Proton donor. N-linked (GlcNAc...) asparagine glycosylation is present at Asn265.

The protein belongs to the glycosyl hydrolase 27 family.

It localises to the secreted. The catalysed reaction is Hydrolysis of terminal, non-reducing alpha-D-galactose residues in alpha-D-galactosides, including galactose oligosaccharides, galactomannans and galactolipids.. Its function is as follows. Hydrolyzes a variety of simple alpha-D-galactoside as well as more complex molecules such as oligosaccharides and polysaccharides. This Aspergillus fumigatus (strain CBS 144.89 / FGSC A1163 / CEA10) (Neosartorya fumigata) protein is Probable alpha-galactosidase B (aglB).